Here is a 505-residue protein sequence, read N- to C-terminus: Putative F-box protein At1g58310 (505 aa).

In terms of domain architecture, F-box spans 7–55; that stretch reads RDIISGLPDSLLCHILSFLNTKEAASTSVLAKKWRYLFASVPNLDFDDS.

This Arabidopsis thaliana (Mouse-ear cress) protein is Putative F-box protein At1g58310.